A 263-amino-acid polypeptide reads, in one-letter code: Acyl-[acyl-carrier-protein]--UDP-N-acetylglucosamine O-acyltransferase (263 aa).

It belongs to the transferase hexapeptide repeat family. LpxA subfamily. As to quaternary structure, homotrimer.

The protein localises to the cytoplasm. It carries out the reaction a (3R)-hydroxyacyl-[ACP] + UDP-N-acetyl-alpha-D-glucosamine = a UDP-3-O-[(3R)-3-hydroxyacyl]-N-acetyl-alpha-D-glucosamine + holo-[ACP]. It participates in glycolipid biosynthesis; lipid IV(A) biosynthesis; lipid IV(A) from (3R)-3-hydroxytetradecanoyl-[acyl-carrier-protein] and UDP-N-acetyl-alpha-D-glucosamine: step 1/6. Functionally, involved in the biosynthesis of lipid A, a phosphorylated glycolipid that anchors the lipopolysaccharide to the outer membrane of the cell. In Campylobacter jejuni subsp. jejuni serotype O:23/36 (strain 81-176), this protein is Acyl-[acyl-carrier-protein]--UDP-N-acetylglucosamine O-acyltransferase.